Here is a 378-residue protein sequence, read N- to C-terminus: MSHVDDGFRSLTLKRFPQTDDVNPLLAWEAADEYLLQQLDETEIRGPVLILNDTFGALSCALAEHSPYSIGDSYLSELGTRENLRHNGIAESSVTFLNSTADYPQAPGVVLIKVPKTLALLEQQLRALRKVVTAQTRIIAGAKARDIHTSTLELFEKVLGPTTTTLAWKKARLINCTFSHPQLADAPQTLSWKLEDTGWTIHNHANVFSRTGLDIGARFFMQHLPENLDGEIVDLGCGNGVIGLSLLAKNPQANVVFVDESPMAVDSSRLNVETNLPEAFERCEFMINNALSGVEPFRFNAVFCNPPFHQKHALTDNIAWEMFHHARRCLKINGELYIVANRHLDYFHKLKKIFGNCATIATNNKFVILKAVKQGHRR.

The protein belongs to the methyltransferase superfamily. RlmG family.

The protein localises to the cytoplasm. It carries out the reaction guanosine(1835) in 23S rRNA + S-adenosyl-L-methionine = N(2)-methylguanosine(1835) in 23S rRNA + S-adenosyl-L-homocysteine + H(+). In terms of biological role, specifically methylates the guanine in position 1835 (m2G1835) of 23S rRNA. The polypeptide is Ribosomal RNA large subunit methyltransferase G (Salmonella gallinarum (strain 287/91 / NCTC 13346)).